The chain runs to 257 residues: Imidazole glycerol phosphate synthase subunit HisF (257 aa).

Active-site residues include Asp-12 and Asp-131.

It belongs to the HisA/HisF family. As to quaternary structure, heterodimer of HisH and HisF.

It localises to the cytoplasm. It carries out the reaction 5-[(5-phospho-1-deoxy-D-ribulos-1-ylimino)methylamino]-1-(5-phospho-beta-D-ribosyl)imidazole-4-carboxamide + L-glutamine = D-erythro-1-(imidazol-4-yl)glycerol 3-phosphate + 5-amino-1-(5-phospho-beta-D-ribosyl)imidazole-4-carboxamide + L-glutamate + H(+). It functions in the pathway amino-acid biosynthesis; L-histidine biosynthesis; L-histidine from 5-phospho-alpha-D-ribose 1-diphosphate: step 5/9. In terms of biological role, IGPS catalyzes the conversion of PRFAR and glutamine to IGP, AICAR and glutamate. The HisF subunit catalyzes the cyclization activity that produces IGP and AICAR from PRFAR using the ammonia provided by the HisH subunit. In Burkholderia ambifaria (strain MC40-6), this protein is Imidazole glycerol phosphate synthase subunit HisF.